The chain runs to 387 residues: Protein RecA, chromosomal (387 aa).

ATP is bound at residue 80-87 (GPESSGKT). The tract at residues 352–387 (EVAETTEDTSTKAKATKAKKEEKVVETEEIELELED) is disordered. The span at 378–387 (TEEIELELED) shows a compositional bias: acidic residues.

Belongs to the RecA family.

It is found in the cytoplasm. Can catalyze the hydrolysis of ATP in the presence of single-stranded DNA, the ATP-dependent uptake of single-stranded DNA by duplex DNA, and the ATP-dependent hybridization of homologous single-stranded DNAs. It interacts with LexA causing its activation and leading to its autocatalytic cleavage. The chain is Protein RecA, chromosomal from Lactococcus lactis subsp. lactis (strain IL1403) (Streptococcus lactis).